We begin with the raw amino-acid sequence, 2513 residues long: Polyprotein P1234 (2513 aa).

The Alphavirus-like MT domain maps to 30–260 (VAQQVTPNDH…EHRASLQSWH (231 aa)). Residues 245 to 264 (GSTLYPEHRASLQSWHLPSV) are nsP1 membrane-binding. The S-palmitoyl cysteine; by host moiety is linked to residue C420. Positions 695-850 (ELTNPPYHEL…KDICTKTFYK (156 aa)) constitute a (+)RNA virus helicase ATP-binding domain. 726–733 (GTPGSGKS) is an a ribonucleoside 5'-triphosphate binding site. One can recognise a (+)RNA virus helicase C-terminal domain in the interval 851–999 (YISRRCTQPV…IEDWEAEHKG (149 aa)). Positions 1012–1341 (NPFSCKTNVC…CVISSVYEGT (330 aa)) constitute a Peptidase C9 domain. A nucleolus localization signal region spans residues 1013-1032 (PFSCKTNVCWAKALEPILAT). Catalysis depends on C1021, which acts as the For cysteine protease nsP2 activity. Positions 1066–1075 (IKFFGMDLTS) match the Nuclear export signal motif. Catalysis depends on H1098, which acts as the For cysteine protease nsP2 activity. The Nuclear localization signal signature appears at 1196 to 1200 (PRKRI). Positions 1348–1507 (APSYRTKREN…RIDAALQLKE (160 aa)) constitute a Macro domain. Positions 1371, 1379, 1459, 1460, and 1461 each coordinate ADP-D-ribose. The Zn(2+) site is built by C1610, C1612, C1635, and C1653. Residues 1679–1696 (PTAPPAQAEEAPEVVATP) show a composition bias toward low complexity. The interval 1679–1705 (PTAPPAQAEEAPEVVATPSPSTADNTS) is disordered. Short sequence motifs (FGDF; binding to host G3BP1) lie at residues 1837–1840 (FGSF) and 1860–1863 (FGSF). The RdRp catalytic domain maps to 2267 to 2382 (DPVLETDIAS…HGVVSDKEMA (116 aa)).

As to quaternary structure, interacts with non-structural protein 3. Interacts with RNA-directed RNA polymerase nsP4. Interacts with protease nsP2. interacts with itself. Interacts with host TMEM45B; this interaction leads to viral replication inhibition. In terms of assembly, interacts with mRNA-capping enzyme nsP1. Interacts with host DDX1. Interacts with host DDX3. Interacts (via C-terminus) with host G3BP1; this interaction inhibits the formation of host stress granules on viral mRNAs and the nsp3-G3BP1 complexes bind viral RNAs and probably orchestrate the assembly of viral replication complexes. Interacts (via C-terminus) with host G3BP2; this interaction inhibits the formation of host stress granules on viral mRNAs and the nsp3-G3BP2 complexes bind viral RNAs and probably orchestrate the assembly of viral replication complexes. Interacts with mRNA-capping enzyme nsP1. Interacts with protease nsP2. interacts with itself. Interacts with host TMEM45B; this interaction leads to viral replication inhibition. As to quaternary structure, interacts with RNA-directed RNA polymerase nsP4. Interacts with mRNA-capping enzyme nsP1. Interacts with KPNA1/karyopherin-alpha1; this interaction probably allows the active transport of protease nsP2 into the host nucleus. The cofactor is Mg(2+). Mn(2+) serves as cofactor. In terms of processing, specific enzymatic cleavages in vivo yield mature proteins. The processing of the polyprotein is temporally regulated. In early stages (1.7 hpi), P1234 is first cleaved in trans through its nsP2 protease activity, releasing P123' and nsP4, which associate to form the early replication complex. At the same time, P1234 is also cut at the nsP1/nsP2 site early in infection but with lower efficiency. After replication of the viral minus-strand RNAs (4 hpi), the polyproteins are cut at the nsP1/nsP2 and nsP2/nsP3 sites very efficiently, preventing accumulation of P123' and P1234 and allowing the formation of the late replication complex. NsP3'/nsP4 site is not cleaved anymore and P34 is produced rather than nsP4. Post-translationally, specific enzymatic cleavages in vivo yield mature proteins. The processing of the polyprotein is temporally regulated. In early stages (1.7 hpi), P123 is cleaved at the nsP1/nsP2 site with low efficiency. After replication of the viral minus-strand RNAs (4 hpi), the polyproteins are cut at the nsP1/nsP2 and nsP2/nsP3 sites very efficiently, preventing accumulation of P123 and allowing the formation of the late replication complex. Specific enzymatic cleavages in vivo yield mature proteins. The processing of the polyprotein is temporally regulated. In early stages (1.7 hpi), P123' is cleaved at the nsP1/nsP2 site with low efficiency. After replication of the viral minus-strand RNAs (4 hpi), the polyproteins are cut at the nsP1/nsP2 and nsP2/nsP3 sites very efficiently, preventing accumulation of P123' and allowing the formation of the late replication complex. In terms of processing, palmitoylated by host palmitoyltransferases ZDHHC2 and ZDHHC19. Post-translationally, phosphorylated by host on serines and threonines. Ubiquitinated; targets the protein for rapid degradation via the ubiquitin system. Nsp4 is present in extremely low quantities due to low frequency of translation through the amber stop-codon and the degradation by the ubiquitin pathway.

The protein resides in the host cytoplasmic vesicle membrane. It localises to the host cell membrane. The protein localises to the host cell projection. Its subcellular location is the host filopodium. It is found in the host nucleus. The protein resides in the host cytoplasm. It carries out the reaction GTP + S-adenosyl-L-methionine = N(7)-methyl-GTP + S-adenosyl-L-homocysteine. The catalysed reaction is N(7)-methyl-GTP + L-histidyl-[protein] = N(tele)-(N(7)-methylguanosine 5'-phospho)-L-histidyl-[protein] + diphosphate. The enzyme catalyses N(tele)-(N(7)-methylguanosine 5'-phospho)-L-histidyl-[protein] + a 5'-end diphospho-(purine-ribonucleoside) in mRNA + H(+) = a 5'-end (N(7)-methyl 5'-triphosphoguanosine)-(purine-ribonucleoside) in mRNA + L-histidyl-[protein]. It catalyses the reaction a 5'-end triphospho-ribonucleoside in mRNA + H2O = a 5'-end diphospho-ribonucleoside in mRNA + phosphate + H(+). It carries out the reaction a ribonucleoside 5'-triphosphate + H2O = a ribonucleoside 5'-diphosphate + phosphate + H(+). The catalysed reaction is ATP + H2O = ADP + phosphate + H(+). The enzyme catalyses RNA(n) + a ribonucleoside 5'-triphosphate = RNA(n+1) + diphosphate. It catalyses the reaction RNA(n) + ATP = RNA(n)-3'-adenine ribonucleotide + diphosphate. It carries out the reaction 4-O-(ADP-D-ribosyl)-L-aspartyl-[protein] + H2O = L-aspartyl-[protein] + ADP-D-ribose + H(+). The catalysed reaction is 5-O-(ADP-D-ribosyl)-L-glutamyl-[protein] + H2O = L-glutamyl-[protein] + ADP-D-ribose + H(+). The enzyme catalyses ADP-alpha-D-ribose 1''-phosphate + H2O = ADP-D-ribose + phosphate. Functionally, inactive precursor of the viral replicase, which is activated by cleavages carried out by the viral protease nsP2. The early replication complex formed by the polyprotein P123 and nsP4 synthesizes minus-strand RNAs. Polyprotein P123 is a short-lived polyprotein that accumulates during early stage of infection. As soon P123 is cleaved into mature proteins, the plus-strand RNAs synthesis begins. Its function is as follows. The early replication complex formed by the polyprotein P123' and nsP4 synthesizes minus-strand RNAs. Polyprotein P123' is a short-lived polyprotein that accumulates during early stage of infection. As soon P123' is cleaved into mature proteins, the plus-strand RNAs synthesis begins. In terms of biological role, cytoplasmic capping enzyme that catalyzes two virus-specific reactions: methyltransferase and nsP1 guanylyltransferase. mRNA-capping is necessary since all viral RNAs are synthesized in the cytoplasm, and host capping enzymes are restricted to the nucleus. The enzymatic reaction involves a covalent link between 7-methyl-GMP and nsP1, whereas eukaryotic capping enzymes form a covalent complex only with GMP. nsP1 capping consists in the following reactions: GTP is first methylated into 7-methyl-GMP and then is covalently linked to nsP1 to form the m7GMp-nsP1 complex from which 7-methyl-GMP complex is transferred to the mRNA to create the cap structure. NsP1 is needed for the initiation of the minus-strand RNAs synthesis. Probably serves as a membrane anchor for the replication complex composed of nsP1-nsP4. Palmitoylated nsP1 is remodeling host cell cytoskeleton, and induces filopodium-like structure formation at the surface of the host cell. Functionally, multifunctional protein whose N-terminus is part of the RNA polymerase complex and displays NTPase, RNA triphosphatase and helicase activities. NTPase and RNA triphosphatase are involved in viral RNA capping and helicase keeps a check on the dsRNA replication intermediates. The C-terminus harbors a protease that specifically cleaves the polyproteins and releases the mature proteins. Required for the shutoff of minus-strand RNAs synthesis. Specifically inhibits the host IFN response by promoting the nuclear export of host STAT1. Also inhibits host transcription by inducing rapid proteasome-dependent degradation of POLR2A, a catalytic subunit of the RNAPII complex. The resulting inhibition of cellular protein synthesis serves to ensure maximal viral gene expression and to evade host immune response. Seems to be essential for minus-strand RNAs and subgenomic 26S mRNAs synthesis. Displays mono-ADP-ribosylhydrolase activity. ADP-ribosylation is a post-translantional modification that controls various processes of the host cell and the virus probably needs to revert it for optimal viral replication. Binds proteins of G3BP family and sequesters them into the viral RNA replication complexes thereby inhibiting the formation of host stress granules on viral mRNAs. The nsp3-G3BP complexes bind viral RNAs and probably orchestrate the assembly of viral replication complexes, thanks to the ability of G3BP family members to self-assemble and bind DNA. Its function is as follows. Seems to be essential for minus-strand RNAs and subgenomic 26S mRNAs synthesis. Displays mono-ADP-ribosylhydrolase activity. ADP-ribosylation is a post-translational modification that controls various processes of the host cell and the virus probably needs to revert it for optimal viral replication. Binds proteins of G3BP family and sequesters them into the viral RNA replication complexes thereby inhibiting the formation of host stress granules on viral mRNAs. The nsp3'-G3BP complexes bind viral RNAs and probably orchestrate the assembly of viral replication complexes, thanks to the ability of G3BP family members to self-assemble and bind DNA. In terms of biological role, RNA dependent RNA polymerase. Replicates genomic and antigenomic RNA by recognizing replications specific signals. The early replication complex formed by the polyprotein P123 and nsP4 synthesizes minus-strand RNAs. The late replication complex composed of fully processed nsP1-nsP4 is responsible for the production of genomic and subgenomic plus-strand RNAs. The core catalytic domain of nsP4 also possesses terminal adenylyltransferase (TATase) activity that is probably involved in maintenance and repair of the poly(A) tail, an element required for replication of the viral genome. The protein is Polyprotein P1234 of Acrocephalus scirpaceus (Eurasian reed-warbler).